The primary structure comprises 867 residues: Zinc finger protein zfp-1 (867 aa).

The segment at 5–57 adopts a PHD-type 1 zinc-finger fold; the sequence is VGGCCVCADENGWTDNPLIYCDGENCEVAVHQGCYGIQEVPEGEWFCAKCTKA. The C2HC pre-PHD-type 2 zinc finger occupies 69 to 102; that stretch reads TFCCQLCPFDYGALKKTDRNGWAHVICALYIPEV. An extended PHD2 domain (ePHD2) region spans residues 69-186; that stretch reads TFCCQLCPFD…KYCGYCENHL (118 aa). A PHD-type 2 zinc finger spans residues 125–186; sequence KLCYICNEER…KYCGYCENHL (62 aa). 4 disordered regions span residues 267–311, 440–477, 503–586, and 753–773; these read GSTV…SLSS, KNDM…GKSP, ADRT…QSNR, and SSGA…STAG. A compositionally biased stretch (polar residues) spans 285–311; the sequence is PLTTSSRSSVAQDPSPPLTINKNSLSS. A compositionally biased stretch (basic and acidic residues) spans 503–512; the sequence is ADRTAAERRA. Over residues 516–527 the composition is skewed to polar residues; the sequence is QSQPSTSTNGGP. Over residues 538 to 550 the composition is skewed to low complexity; the sequence is HTNSTNSTNHQNN. The span at 551–573 shows a compositional bias: polar residues; it reads GLTQNAPASTSMQAGTSSNDGVI. Residues 574 to 585 show a composition bias toward low complexity; that stretch reads SQNGTSSTSQSN. Residues 758-771 are compositionally biased toward polar residues; it reads VNSNIQNHRATPST.

As to quaternary structure, multimer; in vitro. Interacts (via C-terminus) with dot-1.1 to form a heterodimer known as the zfp-1-dot-1.1 complex or DotCom complex. Isoform a: Expressed at high levels in maturing oocytes, but at low levels in the rest of the germ line (at protein level). Isoform a: Not expressed in the pharynx, germ line and tail. Isoform c: Not expressed in the germ line (at protein level). Isoform c: Uniformly expressed.

It localises to the nucleus. The protein localises to the chromosome. Functionally, recruits the histone methyltransferase dot-1.1 to chromatin to methylate 'Lys-79' of histone H3 and activate transcription. Recognizes and binds histone H3 methylated at 'Lys-4' (H3K4me) at the promoters of target genes. During stress, the zfp-1-dot-1.1 complex also plays a role in the deubiquitination of histone H2B sites, which negatively modulates the RNA polymerase II-induced transcription of highly expressed genes. In response to stress, binds to the pdk-1 promoter to negatively regulate pdk-1 expression, which negatively modulates daf-16/FOXO-mediated gene expression. Thus, most likely via this mechanism, in response to stress, it confers a protective role against neuronal necrosis. Plays a role in Insulin/IGF-1-like signaling (IIS)- and diet restriction-mediated lifespan extension by controlling daf-16/FOXO and pha-4/FOXA recruitment to target promoters. May negatively regulate the expression of genes required for vulval development. May play a role in axon guidance in D-type motor neurons. May suppress sensitivity to RNAi. Required for migration of HSN motor neurons during embryogenesis. In Caenorhabditis elegans, this protein is Zinc finger protein zfp-1.